The chain runs to 96 residues: Co-chaperonin GroES (96 aa).

The protein belongs to the GroES chaperonin family. As to quaternary structure, heptamer of 7 subunits arranged in a ring. Interacts with the chaperonin GroEL.

The protein resides in the cytoplasm. Together with the chaperonin GroEL, plays an essential role in assisting protein folding. The GroEL-GroES system forms a nano-cage that allows encapsulation of the non-native substrate proteins and provides a physical environment optimized to promote and accelerate protein folding. GroES binds to the apical surface of the GroEL ring, thereby capping the opening of the GroEL channel. The protein is Co-chaperonin GroES of Idiomarina loihiensis (strain ATCC BAA-735 / DSM 15497 / L2-TR).